Here is a 274-residue protein sequence, read N- to C-terminus: MPLLKAKPTSAGRRHVVQVVNPDLHKGAPYAPLLEKNSKSGGRNNNGRITVRHVGGGHKQHYRVIDFKRNKDGIPAKIERLEYDPNRSANICLVLYADGERRYILAPKGAKAGDQIQSGSDAAIKAGNSLPMRNIPVGTTVHAIEMKPGKGAQIARSAGQYAQILARAEGYVTLRLRSGEVRRVLADCRATIGEIGNAEHMLRSLGKAGANRWRGIRPTVRGVAMNPVDHPHGGGEGRTSGGRHPVSPWGVPTKGKKTRSNKRTDKLIVRRRNK.

Disordered stretches follow at residues 28 to 53 (APYA…TVRH) and 223 to 274 (VAMN…RRNK). The segment covering 39–48 (KSGGRNNNGR) has biased composition (low complexity).

The protein belongs to the universal ribosomal protein uL2 family. In terms of assembly, part of the 50S ribosomal subunit. Forms a bridge to the 30S subunit in the 70S ribosome.

One of the primary rRNA binding proteins. Required for association of the 30S and 50S subunits to form the 70S ribosome, for tRNA binding and peptide bond formation. It has been suggested to have peptidyltransferase activity; this is somewhat controversial. Makes several contacts with the 16S rRNA in the 70S ribosome. The sequence is that of Large ribosomal subunit protein uL2 from Pseudoalteromonas atlantica (strain T6c / ATCC BAA-1087).